Here is a 62-residue protein sequence, read N- to C-terminus: Cytotoxin 7 (62 aa).

A signal peptide spans 1–2 (YT). 4 cysteine pairs are disulfide-bonded: C5/C23, C16/C40, C44/C55, and C56/C61.

The protein belongs to the three-finger toxin family. Short-chain subfamily. Type IA cytotoxin sub-subfamily. Monomer in solution; Homodimer and oligomer in the presence of negatively charged lipids forming a pore with a size ranging between 20 and 30 Angstroms. As to expression, expressed by the venom gland.

The protein localises to the secreted. It localises to the target cell membrane. In terms of biological role, shows cytolytic activity on many different cells by forming pore in lipid membranes. In vivo, increases heart rate or kills the animal by cardiac arrest. In addition, it binds to heparin with high affinity, interacts with Kv channel-interacting protein 1 (KCNIP1) in a calcium-independent manner, and binds to integrin alpha-V/beta-3 (ITGAV/ITGB3) with moderate affinity. The chain is Cytotoxin 7 from Naja sputatrix (Malayan spitting cobra).